Consider the following 968-residue polypeptide: Chaperone protein ClpB3, chloroplastic (968 aa).

The transit peptide at 1–67 (MATATTTATA…RLDHRPFVVR (67 aa)) directs the protein to the chloroplast. A Clp R domain is found at 78–222 (TQQEFTEMAW…KSAIESIRGK (145 aa)). Repeat regions lie at residues 82 to 147 (FTEM…IQRQ) and 159 to 222 (LGRD…IRGK). Residues 237–485 (LEKYGKDLTA…KLKMEITSKP (249 aa)) form an i region. 282-289 (GEPGVGKT) serves as a coordination point for ATP. A coiled-coil region spans residues 488–606 (LDELDRSVIK…NEYLSSGKSM (119 aa)). The interval 611-802 (VLGSDIAEIV…VIIMTSNVGS (192 aa)) is II. 685–692 (GPTGVGKT) is a binding site for ATP.

It belongs to the ClpA/ClpB family.

It localises to the plastid. The protein resides in the chloroplast. Functionally, molecular chaperone essential for chloroplast development and seedling viability. Mediates internal thylakoid membrane formation and confers thermotolerance to chloroplasts during heat stress. The polypeptide is Chaperone protein ClpB3, chloroplastic (CLPB3) (Arabidopsis thaliana (Mouse-ear cress)).